The sequence spans 246 residues: tRNA pseudouridine synthase A (246 aa).

The active-site Nucleophile is the Asp-52. Tyr-112 is a substrate binding site.

The protein belongs to the tRNA pseudouridine synthase TruA family. As to quaternary structure, homodimer.

It catalyses the reaction uridine(38/39/40) in tRNA = pseudouridine(38/39/40) in tRNA. In terms of biological role, formation of pseudouridine at positions 38, 39 and 40 in the anticodon stem and loop of transfer RNAs. The polypeptide is tRNA pseudouridine synthase A (Pelagibacter ubique (strain HTCC1062)).